Consider the following 124-residue polypeptide: MNALGRHILAEIYGCDAAILNNRNLIEKIMVESALEAGAEVREVAFHKFSPQGVSGVVVISESHLAIHTWPELGYAAVDVFTCGEKVNPWDACNYLTERFKAKHMTATEVKRGVFEEPVKVANL.

Catalysis depends on S63, which acts as the Schiff-base intermediate with substrate; via pyruvic acid. Pyruvic acid (Ser); by autocatalysis is present on S63. H68 (proton acceptor; for processing activity) is an active-site residue. Catalysis depends on C83, which acts as the Proton donor; for catalytic activity.

This sequence belongs to the prokaryotic AdoMetDC family. Type 1 subfamily. In terms of assembly, heterotetramer of two alpha and two beta chains arranged as a dimer of alpha/beta heterodimers. Pyruvate serves as cofactor. Post-translationally, is synthesized initially as an inactive proenzyme. Formation of the active enzyme involves a self-maturation process in which the active site pyruvoyl group is generated from an internal serine residue via an autocatalytic post-translational modification. Two non-identical subunits are generated from the proenzyme in this reaction, and the pyruvate is formed at the N-terminus of the alpha chain, which is derived from the carboxyl end of the proenzyme. The post-translation cleavage follows an unusual pathway, termed non-hydrolytic serinolysis, in which the side chain hydroxyl group of the serine supplies its oxygen atom to form the C-terminus of the beta chain, while the remainder of the serine residue undergoes an oxidative deamination to produce ammonia and the pyruvoyl group blocking the N-terminus of the alpha chain.

It carries out the reaction S-adenosyl-L-methionine + H(+) = S-adenosyl 3-(methylsulfanyl)propylamine + CO2. It participates in amine and polyamine biosynthesis; S-adenosylmethioninamine biosynthesis; S-adenosylmethioninamine from S-adenosyl-L-methionine: step 1/1. In terms of biological role, catalyzes the decarboxylation of S-adenosylmethionine to S-adenosylmethioninamine (dcAdoMet), the propylamine donor required for the synthesis of the polyamines spermine and spermidine from the diamine putrescine. In Acetivibrio thermocellus (strain ATCC 27405 / DSM 1237 / JCM 9322 / NBRC 103400 / NCIMB 10682 / NRRL B-4536 / VPI 7372) (Clostridium thermocellum), this protein is S-adenosylmethionine decarboxylase proenzyme.